A 441-amino-acid chain; its full sequence is Cytochrome P450 monooxygenase cpsC (441 aa).

Residues 175–195 are disordered; it reads STTSQARKDETTATQQAGMEQ. Residues 186–195 show a composition bias toward polar residues; that stretch reads TATQQAGMEQ. Heme is bound at residue cysteine 377.

The protein belongs to the cytochrome P450 family. It depends on heme as a cofactor.

The enzyme catalyses campesine D + reduced [NADPH--hemoprotein reductase] + O2 = campesine G + oxidized [NADPH--hemoprotein reductase] + 2 H2O + H(+). It functions in the pathway alkaloid biosynthesis. Cytochrome P450 monooxygenase; part of the gene cluster that mediates the biosynthesis of campesine G, a dimeric indole piperazine alkaloid that shows good insecticidal activity Galleria mellonella. Within the pathway, cpsC catalyzes regioselective dehydrogenation reaction towards C2-N1 of the (2H)-indole ring of campesine D to yield the final product, campesine G. The non-canonical non-ribosomal peptide synthetase cpsA catalyzes the first steps of the pathway by producing L-tryptophanal and L-valinal from their respective amino-acids. These products condensate spontaneously to form trypyl-valyl pyrazine also known as didehydrocampesine A. The NmrA-like family domain-containing oxidoreductase cpsB is the next enzyme in cps pathway and reduces the unstable didehydrocampesine A to campesine A. The methyltransferase cpsF and the acetyltransferase cpsE both recognize N13 of piperazine ring to carry out methylation and acetylation of campesine A to produce campesine C and B, respectively. The cytochrome P450 monooxygenase cpsD then acts as a dimerase that catalyzes oxidative heterocoupling between campesine B and C to produce heterodimers with unexpected 6/5/6/6/6/6/5/6 eight-ring scaffold called campesine D. Finally,the cytochrome P450 monooxygenase cpsC is a regioselective dehydrogenase that catalyzes dehydrogenation reaction towards C2-N1 to produce campesine G. This chain is Cytochrome P450 monooxygenase cpsC, found in Aspergillus campestris (strain IBT 28561).